Here is a 359-residue protein sequence, read N- to C-terminus: Phosphoserine aminotransferase (359 aa).

Positions 9 and 42 each coordinate L-glutamate. Pyridoxal 5'-phosphate contacts are provided by residues A76 to S77, W102, T152, D171, and Q194. K195 is subject to N6-(pyridoxal phosphate)lysine. N236–T237 contacts pyridoxal 5'-phosphate.

The protein belongs to the class-V pyridoxal-phosphate-dependent aminotransferase family. SerC subfamily. Homodimer. It depends on pyridoxal 5'-phosphate as a cofactor.

Its subcellular location is the cytoplasm. The enzyme catalyses O-phospho-L-serine + 2-oxoglutarate = 3-phosphooxypyruvate + L-glutamate. It catalyses the reaction 4-(phosphooxy)-L-threonine + 2-oxoglutarate = (R)-3-hydroxy-2-oxo-4-phosphooxybutanoate + L-glutamate. It participates in amino-acid biosynthesis; L-serine biosynthesis; L-serine from 3-phospho-D-glycerate: step 2/3. It functions in the pathway cofactor biosynthesis; pyridoxine 5'-phosphate biosynthesis; pyridoxine 5'-phosphate from D-erythrose 4-phosphate: step 3/5. Functionally, catalyzes the reversible conversion of 3-phosphohydroxypyruvate to phosphoserine and of 3-hydroxy-2-oxo-4-phosphonooxybutanoate to phosphohydroxythreonine. In Marinomonas sp. (strain MWYL1), this protein is Phosphoserine aminotransferase.